Here is a 317-residue protein sequence, read N- to C-terminus: Ornithine carbamoyltransferase (317 aa).

Carbamoyl phosphate is bound by residues 57–60 (STRT), Gln84, Arg108, and 135–138 (HPCQ). Residues Asn166, Asp230, and 234-235 (SM) each bind L-ornithine. Residues 270–271 (CL) and Arg298 each bind carbamoyl phosphate.

It belongs to the aspartate/ornithine carbamoyltransferase superfamily. OTCase family. As to quaternary structure, homododecamer.

It is found in the cytoplasm. It catalyses the reaction carbamoyl phosphate + L-ornithine = L-citrulline + phosphate + H(+). The protein operates within amino-acid biosynthesis; L-arginine biosynthesis; L-arginine from L-ornithine and carbamoyl phosphate: step 1/3. Reversibly catalyzes the transfer of the carbamoyl group from carbamoyl phosphate (CP) to the N(epsilon) atom of ornithine (ORN) to produce L-citrulline. The chain is Ornithine carbamoyltransferase from Pyrococcus abyssi (strain GE5 / Orsay).